Consider the following 100-residue polypeptide: Small ribosomal subunit protein uS14c (100 aa).

This sequence belongs to the universal ribosomal protein uS14 family. Part of the 30S ribosomal subunit.

Its subcellular location is the plastid. The protein localises to the chloroplast. In terms of biological role, binds 16S rRNA, required for the assembly of 30S particles. The sequence is that of Small ribosomal subunit protein uS14c from Nymphaea alba (White water-lily).